Reading from the N-terminus, the 203-residue chain is NADH-quinone oxidoreductase subunit C (203 aa).

It belongs to the complex I 30 kDa subunit family. In terms of assembly, NDH-1 is composed of 14 different subunits. Subunits NuoB, C, D, E, F, and G constitute the peripheral sector of the complex.

The protein resides in the cell inner membrane. It carries out the reaction a quinone + NADH + 5 H(+)(in) = a quinol + NAD(+) + 4 H(+)(out). In terms of biological role, NDH-1 shuttles electrons from NADH, via FMN and iron-sulfur (Fe-S) centers, to quinones in the respiratory chain. The immediate electron acceptor for the enzyme in this species is believed to be ubiquinone. Couples the redox reaction to proton translocation (for every two electrons transferred, four hydrogen ions are translocated across the cytoplasmic membrane), and thus conserves the redox energy in a proton gradient. In Methylibium petroleiphilum (strain ATCC BAA-1232 / LMG 22953 / PM1), this protein is NADH-quinone oxidoreductase subunit C.